Consider the following 271-residue polypeptide: DNA repair protein RecO (271 aa).

It belongs to the RecO family.

Involved in DNA repair and RecF pathway recombination. The polypeptide is DNA repair protein RecO (Rhodococcus erythropolis (strain PR4 / NBRC 100887)).